The following is a 570-amino-acid chain: Spermatocyte protein spe-26 (570 aa).

Kelch repeat units lie at residues 244–291 (VLII…IVDG), 293–338 (LYLF…SVVY), 341–393 (RIYV…VFEN), 395–440 (IYVS…NHGN), 442–487 (LLIV…SYKG), and 489–535 (LFSV…VAPN).

Testis, in both spermatogonial cells and spermatocytes.

It localises to the cytoplasm. The protein resides in the cytoskeleton. In terms of biological role, may play a role in the spermatocyte cytoskeleton, possibly interacting with actin. The protein is Spermatocyte protein spe-26 (spe-26) of Caenorhabditis elegans.